Reading from the N-terminus, the 362-residue chain is Chorismate synthase (362 aa).

Arginine 47 serves as a coordination point for NADP(+). FMN-binding positions include 124–126 (RAS), glycine 286, 301–305 (KPTAT), and arginine 327.

Belongs to the chorismate synthase family. In terms of assembly, homotetramer. Requires FMNH2 as cofactor.

The catalysed reaction is 5-O-(1-carboxyvinyl)-3-phosphoshikimate = chorismate + phosphate. The protein operates within metabolic intermediate biosynthesis; chorismate biosynthesis; chorismate from D-erythrose 4-phosphate and phosphoenolpyruvate: step 7/7. Functionally, catalyzes the anti-1,4-elimination of the C-3 phosphate and the C-6 proR hydrogen from 5-enolpyruvylshikimate-3-phosphate (EPSP) to yield chorismate, which is the branch point compound that serves as the starting substrate for the three terminal pathways of aromatic amino acid biosynthesis. This reaction introduces a second double bond into the aromatic ring system. This is Chorismate synthase from Synechococcus sp. (strain WH7803).